The chain runs to 232 residues: Putative N-acetylmannosamine-6-phosphate 2-epimerase (232 aa).

It belongs to the NanE family.

The enzyme catalyses an N-acyl-D-glucosamine 6-phosphate = an N-acyl-D-mannosamine 6-phosphate. The protein operates within amino-sugar metabolism; N-acetylneuraminate degradation; D-fructose 6-phosphate from N-acetylneuraminate: step 3/5. Its function is as follows. Converts N-acetylmannosamine-6-phosphate (ManNAc-6-P) to N-acetylglucosamine-6-phosphate (GlcNAc-6-P). This is Putative N-acetylmannosamine-6-phosphate 2-epimerase from Corynebacterium glutamicum (strain R).